The sequence spans 485 residues: Forkhead box protein N3 (485 aa).

Residues methionine 1–glycine 21 are disordered. Residues serine 83, serine 85, and serine 97 each carry the phosphoserine modification. The interval proline 86–arginine 108 is disordered. Positions lysine 114–serine 210 form a DNA-binding region, fork-head. The tract at residues arginine 315 to serine 454 is disordered. Low complexity predominate over residues serine 338–serine 359. Positions histidine 382–leucine 404 are enriched in basic and acidic residues. Residues glutamine 412–lysine 424 show a composition bias toward basic residues. Serine 443 bears the Phosphoserine mark.

As to quaternary structure, interacts through its C-terminus with the C-terminus of SNW1/SKIP.

It localises to the nucleus. In terms of biological role, acts as a transcriptional repressor. May be involved in DNA damage-inducible cell cycle arrests (checkpoints). This is Forkhead box protein N3 (FOXN3) from Sus scrofa (Pig).